A 199-amino-acid polypeptide reads, in one-letter code: UPF0462 protein C4orf33 (199 aa).

This sequence belongs to the UPF0462 family.

This Homo sapiens (Human) protein is UPF0462 protein C4orf33 (C4orf33).